Here is a 288-residue protein sequence, read N- to C-terminus: Undecaprenyl-diphosphatase (288 aa).

8 helical membrane passes run 11-31 (LDLW…FLPI), 49-69 (PGVA…LSYF), 94-114 (AQMG…GLLI), 129-149 (LAAI…AEQL), 159-179 (LRLA…IPGV), 199-219 (AARF…LVEL), 234-254 (VLAI…AWLL), and 265-285 (FVVY…TGTL).

Belongs to the UppP family.

It localises to the cell inner membrane. The catalysed reaction is di-trans,octa-cis-undecaprenyl diphosphate + H2O = di-trans,octa-cis-undecaprenyl phosphate + phosphate + H(+). Its function is as follows. Catalyzes the dephosphorylation of undecaprenyl diphosphate (UPP). Confers resistance to bacitracin. The chain is Undecaprenyl-diphosphatase from Synechococcus elongatus (strain ATCC 33912 / PCC 7942 / FACHB-805) (Anacystis nidulans R2).